We begin with the raw amino-acid sequence, 412 residues long: cAMP-dependent protein kinase regulatory subunit (412 aa).

A compositionally biased stretch (polar residues) spans 1 to 11 (MSNYSHSSNNP). The segment at 1–146 (MSNYSHSSNN…TPPSHPKSEE (146 aa)) is disordered. Positions 16–29 (STKEDKPSSFHKIA) are enriched in basic and acidic residues. The segment at 23–159 (SSFHKIAEDE…RLKTAVSNNF (137 aa)) is dimerization and phosphorylation. Composition is skewed to polar residues over residues 49–60 (NADNSAGGNNPL) and 119–138 (TSVS…SWTP). S120 carries the post-translational modification Phosphoserine. Residues 160 to 291 (LFSH…EEVP), E238, R247, 292 to 405 (LLSS…TEYS), E359, and R368 each bind 3',5'-cyclic AMP.

Belongs to the cAMP-dependent kinase regulatory chain family. In terms of assembly, tetramer, composed of 2 regulatory (R) and 2 catalytic (C) subunits. In the presence of cAMP it dissociates into 2 active monomeric C subunits and an R dimer.

The protein is cAMP-dependent protein kinase regulatory subunit (pkaR) of Emericella nidulans (strain FGSC A4 / ATCC 38163 / CBS 112.46 / NRRL 194 / M139) (Aspergillus nidulans).